Consider the following 208-residue polypeptide: FMN-dependent NADH:quinone oxidoreductase 1 (208 aa).

17–19 (SVS) provides a ligand contact to FMN.

This sequence belongs to the azoreductase type 1 family. Homodimer. FMN is required as a cofactor.

The catalysed reaction is 2 a quinone + NADH + H(+) = 2 a 1,4-benzosemiquinone + NAD(+). It carries out the reaction N,N-dimethyl-1,4-phenylenediamine + anthranilate + 2 NAD(+) = 2-(4-dimethylaminophenyl)diazenylbenzoate + 2 NADH + 2 H(+). In terms of biological role, quinone reductase that provides resistance to thiol-specific stress caused by electrophilic quinones. Functionally, also exhibits azoreductase activity. Catalyzes the reductive cleavage of the azo bond in aromatic azo compounds to the corresponding amines. The protein is FMN-dependent NADH:quinone oxidoreductase 1 of Listeria monocytogenes serovar 1/2a (strain ATCC BAA-679 / EGD-e).